The primary structure comprises 142 residues: Large ribosomal subunit protein uL13 (142 aa).

It belongs to the universal ribosomal protein uL13 family. As to quaternary structure, part of the 50S ribosomal subunit.

Functionally, this protein is one of the early assembly proteins of the 50S ribosomal subunit, although it is not seen to bind rRNA by itself. It is important during the early stages of 50S assembly. In Francisella philomiragia subsp. philomiragia (strain ATCC 25017 / CCUG 19701 / FSC 153 / O#319-036), this protein is Large ribosomal subunit protein uL13.